Consider the following 157-residue polypeptide: Ribosomal RNA large subunit methyltransferase H (157 aa).

Residues Leu73, Gly104, and 123–128 each bind S-adenosyl-L-methionine; that span reads LGPLTL.

Belongs to the RNA methyltransferase RlmH family. As to quaternary structure, homodimer.

The protein localises to the cytoplasm. It catalyses the reaction pseudouridine(1915) in 23S rRNA + S-adenosyl-L-methionine = N(3)-methylpseudouridine(1915) in 23S rRNA + S-adenosyl-L-homocysteine + H(+). Its function is as follows. Specifically methylates the pseudouridine at position 1915 (m3Psi1915) in 23S rRNA. The protein is Ribosomal RNA large subunit methyltransferase H of Xylella fastidiosa (strain M12).